A 246-amino-acid chain; its full sequence is Small ribosomal subunit protein uS2 (246 aa).

The protein belongs to the universal ribosomal protein uS2 family.

The chain is Small ribosomal subunit protein uS2 from Stutzerimonas stutzeri (strain A1501) (Pseudomonas stutzeri).